The following is a 150-amino-acid chain: SsrA-binding protein (150 aa).

This sequence belongs to the SmpB family.

The protein resides in the cytoplasm. Functionally, required for rescue of stalled ribosomes mediated by trans-translation. Binds to transfer-messenger RNA (tmRNA), required for stable association of tmRNA with ribosomes. tmRNA and SmpB together mimic tRNA shape, replacing the anticodon stem-loop with SmpB. tmRNA is encoded by the ssrA gene; the 2 termini fold to resemble tRNA(Ala) and it encodes a 'tag peptide', a short internal open reading frame. During trans-translation Ala-aminoacylated tmRNA acts like a tRNA, entering the A-site of stalled ribosomes, displacing the stalled mRNA. The ribosome then switches to translate the ORF on the tmRNA; the nascent peptide is terminated with the 'tag peptide' encoded by the tmRNA and targeted for degradation. The ribosome is freed to recommence translation, which seems to be the essential function of trans-translation. This chain is SsrA-binding protein, found in Chlamydia caviae (strain ATCC VR-813 / DSM 19441 / 03DC25 / GPIC) (Chlamydophila caviae).